The primary structure comprises 61 residues: uncharacterized protein (61 aa).

The interval 38–61 (TPRPFTPGLADPRRLGPRRVQAAQ) is disordered.

This is an uncharacterized protein from Homo sapiens (Human).